Consider the following 1038-residue polypeptide: Ribosome quality control complex subunit 2 (1038 aa).

Residues 350-383 (ALRIQNQESQAQKKIDDARAENDRKIQALLDVQE) adopt a coiled-coil conformation. 3 disordered regions span residues 459–499 (LNTS…MKRK), 708–824 (KTSG…DEPG), and 877–898 (QRKK…KREK). A coiled-coil region spans residues 713 to 768 (EDNGDDDEEEEEEEEEEEEEEEEEEEEEEEEKEEEEKEEEQQQDEDDSNEVNGLEK). A compositionally biased stretch (acidic residues) spans 714–761 (DNGDDDEEEEEEEEEEEEEEEEEEEEEEEEKEEEEKEEEQQQDEDDSN). Residues 780 to 794 (SFEHDNLEKDIEKHC) show a composition bias toward basic and acidic residues. A compositionally biased stretch (polar residues) spans 795–805 (TISSDTDSDSG). S797 bears the Phosphoserine mark. Positions 830–912 (IENINSNVRG…QALKFTKKEK (83 aa)) form a coiled coil. A compositionally biased stretch (basic and acidic residues) spans 877-894 (QRKKEEIMKREVREDRKN).

It belongs to the NEMF family. As to quaternary structure, component of the ribosome quality control complex (RQC), composed of the E3 ubiquitin ligase RKR1/LTN1, RQC1 and RQC2, as well as CDC48 and its ubiquitin-binding cofactors associated with the 60S ribosomal subunit. RQC2 binds to the 40S-binding surface of tRNAs.

The protein resides in the cytoplasm. Functionally, key component of the ribosome quality control complex (RQC), a ribosome-associated complex that mediates the extraction of incompletely synthesized nascent chains from stalled ribosomes as well as their ubiquitin-mediated proteasomal degradation. Thereby, frees 60S subunit ribosomes from the stalled translation complex and prevents the accumulation of nascent polypeptide chains that are potentially toxic for the cell. Within the RQC complex, RQC2 specifically binds stalled 60S ribosomal subunits by recognizing an exposed, nascent chain-conjugated tRNA moiety and promotes the recruitment of RKR1/LTN1 to stalled 60S subunits. Following binding to stalled 60S ribosomal subunits, RQC2 mediates CAT tailing by recruiting alanine- and threonine-charged tRNA to the A-site and directing the elongation of stalled nascent chains independently of mRNA or 40S subunits, leading to non-templated C-terminal Ala and Thr extensions (CAT tails). CAT tails promote the RKR1/LTN1-mediated ubiquitination of incompletely synthesized nascent polypeptides: CAT tailing facilitates RKR1/LTN1-dependent ubiquitination by exposing lysine residues that would otherwise remain buried in the ribosomal exit tunnel. Following ubiquitination, incompletely synthesized nascent polypeptides are recognized by CDC48 and degraded by the proteasome. CAT-tailed proteins tend to aggregate and sequester chaperones and can induce proteotoxic stress; their RKR1/LTN1-dependent ubiquitination and degradation is required to prevent proteotoxic stress. The chain is Ribosome quality control complex subunit 2 from Saccharomyces cerevisiae (strain ATCC 204508 / S288c) (Baker's yeast).